Consider the following 60-residue polypeptide: MRHLEKPIRVAVHYCVVRSDVCDGWDVFIGVTLIGMFISYYLYALISICRKGEGLTTSNG.

The chain crosses the membrane as a helical span at residues 28-48; sequence FIGVTLIGMFISYYLYALISI.

It is found in the host membrane. The protein is Protein P7 of Vitis vinifera (Grape).